The sequence spans 265 residues: SPbeta prophage-derived uncharacterized protein YomU (265 aa).

Residues 238-265 are disordered; that stretch reads KADGTKGVVTSDEGTGSSQSSDLGGTTE. Polar residues predominate over residues 249–265; sequence DEGTGSSQSSDLGGTTE.

The polypeptide is SPbeta prophage-derived uncharacterized protein YomU (yomU) (Bacillus subtilis (strain 168)).